A 258-amino-acid polypeptide reads, in one-letter code: 2-oxo-tetronate isomerase (258 aa).

Residue glutamate 143 is the Proton donor/acceptor of the active site. Mg(2+) is bound by residues glutamate 143, aspartate 178, glutamine 204, and glutamate 240. Catalysis depends on glutamate 240, which acts as the Proton donor/acceptor.

This sequence belongs to the hyi family. OtnI subfamily.

It catalyses the reaction 2-dehydro-L-erythronate = 3-dehydro-L-erythronate. It carries out the reaction 2-dehydro-D-erythronate = 3-dehydro-D-erythronate. Functionally, catalyzes the isomerization of 2-oxo-tetronate to 3-oxo-tetronate. The sequence is that of 2-oxo-tetronate isomerase from Haemophilus influenzae (strain ATCC 51907 / DSM 11121 / KW20 / Rd).